The chain runs to 155 residues: Aspartate carbamoyltransferase regulatory chain (155 aa).

Positions 112, 117, 138, and 141 each coordinate Zn(2+).

The protein belongs to the PyrI family. As to quaternary structure, contains catalytic and regulatory chains. Zn(2+) serves as cofactor.

In terms of biological role, involved in allosteric regulation of aspartate carbamoyltransferase. The polypeptide is Aspartate carbamoyltransferase regulatory chain (Methanocorpusculum labreanum (strain ATCC 43576 / DSM 4855 / Z)).